Reading from the N-terminus, the 306-residue chain is Mitochondrial uncoupling protein 1 (306 aa).

Solcar repeat units follow at residues 9 to 102 (LSLP…VKNL), 112 to 203 (VPLS…VKET), and 212 to 296 (DNVV…AKKY). The next 6 helical transmembrane spans lie at 15–35 (FACS…LDTA), 71–91 (LRSL…FGGL), 118–138 (ILAG…TDLV), 177–197 (TGLG…LASY), 218–238 (ILSG…VDVV), and 269–289 (YKGF…MFLT).

The protein belongs to the mitochondrial carrier (TC 2.A.29) family. Widely expressed.

It localises to the mitochondrion inner membrane. Functionally, PUMPS are mitochondrial transporter proteins that create proton leaks across the inner mitochondrial membrane, thus uncoupling oxidative phosphorylation. This leads to a decrease in the efficiency of oxidative phosphorylation and an increase in heat production. Is involved in protecting plant cells against oxidative stress damage and maintaining the redox balance of the mitochondrial electron transport chain to facilitate photosynthetic metabolism. May play a regulatory role during photorespiration. This is Mitochondrial uncoupling protein 1 (PUMP1) from Arabidopsis thaliana (Mouse-ear cress).